Reading from the N-terminus, the 425-residue chain is MVNNDKHDPLMLARQLPLKSVALILAGGRGTRLKGLTALRAKPAVHFGGKFRIIDFALSNCLNSGIRRIGVITQYQSHTLVQHIQRGWSFLNAEMNEFVDLLPAQQRNATDHWYRGTADAVCQNLDIIRRYRAEYVVILAGDHIYKMDYSRMLIDHVEKGAECTVACLPVPLEEASAFGVMSVDKQHRILDFAEKPDNPTPMPDNPDMALASMGIYVFNADYLYQLLDADHNTPDSNHDFGQDLIPKIVSQRLAWAHPFTLSCVTSGEDENQYWRDVGTLEAYWRANLDLASVTPELDVYDRHWPIRSAIESLPPAKFVQDRSGSHGMTMNSLVSGGCIVSGSVVTHSVLFPRVRVNSFCSIDSTVILPDVNVGRSCRLRRCVIDRACNLPEGMVIGENAEEDSRRFYRSEEGIVLVTRSMLEKL.

Residues Tyr114, Gly179, 194 to 195, and Ser212 each bind alpha-D-glucose 1-phosphate; that span reads EK.

Belongs to the bacterial/plant glucose-1-phosphate adenylyltransferase family. Homotetramer.

The enzyme catalyses alpha-D-glucose 1-phosphate + ATP + H(+) = ADP-alpha-D-glucose + diphosphate. It participates in glycan biosynthesis; glycogen biosynthesis. In terms of biological role, involved in the biosynthesis of ADP-glucose, a building block required for the elongation reactions to produce glycogen. Catalyzes the reaction between ATP and alpha-D-glucose 1-phosphate (G1P) to produce pyrophosphate and ADP-Glc. This chain is Glucose-1-phosphate adenylyltransferase, found in Pectobacterium carotovorum subsp. carotovorum (strain PC1).